The primary structure comprises 73 residues: MLALSRKKDEAIIINDDIEITIIEIKGDQVKLGISAPKSVPIYRKEVYAQILDSNKEAASSVDVKTLNQLFKK.

The protein belongs to the CsrA/RsmA family. In terms of assembly, homodimer; the beta-strands of each monomer intercalate to form a hydrophobic core, while the alpha-helices form wings that extend away from the core.

It localises to the cytoplasm. Its function is as follows. A translational regulator that binds mRNA to regulate translation initiation and/or mRNA stability. Usually binds in the 5'-UTR at or near the Shine-Dalgarno sequence preventing ribosome-binding, thus repressing translation. Its main target seems to be the major flagellin gene, while its function is anatagonized by FliW. This is Translational regulator CsrA from Lachnospira eligens (strain ATCC 27750 / DSM 3376 / VPI C15-48 / C15-B4) (Eubacterium eligens).